Consider the following 84-residue polypeptide: UPF0291 protein SMU_447 (84 aa).

The segment at 57-84 is disordered; that stretch reads EGNDITPAKLKEIQRQKGIHGRKPEDNS.

It belongs to the UPF0291 family.

Its subcellular location is the cytoplasm. This is UPF0291 protein SMU_447 from Streptococcus mutans serotype c (strain ATCC 700610 / UA159).